Here is a 504-residue protein sequence, read N- to C-terminus: Arabinose import ATP-binding protein AraG (504 aa).

ABC transporter domains follow at residues 8–243 and 256–499; these read LSFR…MVGR and YGEE…MPKV. 40 to 47 serves as a coordination point for ATP; that stretch reads GENGAGKS.

The protein belongs to the ABC transporter superfamily. Arabinose importer (TC 3.A.1.2.2) family. In terms of assembly, the complex is composed of two ATP-binding proteins (AraG), two transmembrane proteins (AraH) and a solute-binding protein (AraF).

It is found in the cell inner membrane. The enzyme catalyses L-arabinose(out) + ATP + H2O = L-arabinose(in) + ADP + phosphate + H(+). Part of the ABC transporter complex AraFGH involved in arabinose import. Responsible for energy coupling to the transport system. This is Arabinose import ATP-binding protein AraG from Escherichia coli O6:K15:H31 (strain 536 / UPEC).